The primary structure comprises 181 residues: Regulator of G-protein signaling 10 (181 aa).

Residues 1-35 are disordered; it reads MFTRAVSRLSRKRPPSDIHDGDGSSSSGHQSLKST. Serine 24 and serine 41 each carry phosphoserine. Positions 41–156 constitute an RGS domain; sequence SLENLLEDPE…LKSDLFLKHR (116 aa). The S-palmitoyl cysteine moiety is linked to residue cysteine 74. Positions 157-181 are disordered; sequence RTEEEEEDPPDAQTAAKRASRIYNT. Serine 176 carries the post-translational modification Phosphoserine.

In terms of assembly, interacts with GNAZ, GNAI1 and GNAI3. Associates specifically with the activated, GTP-bound forms of GNAZ and GNAI3.

It localises to the cytoplasm. The protein resides in the cytosol. The protein localises to the nucleus. Functionally, regulates G protein-coupled receptor signaling cascades, including signaling downstream of the muscarinic acetylcholine receptor CHRM2. Inhibits signal transduction by increasing the GTPase activity of G protein alpha subunits, thereby driving them into their inactive GDP-bound form. Modulates the activity of potassium channels that are activated in response to CHRM2 signaling. Activity on GNAZ is inhibited by palmitoylation of the G-protein. The protein is Regulator of G-protein signaling 10 (Rgs10) of Rattus norvegicus (Rat).